The primary structure comprises 266 residues: Putative carbamate hydrolase RutD (266 aa).

Belongs to the AB hydrolase superfamily. Hydrolase RutD family.

It carries out the reaction carbamate + 2 H(+) = NH4(+) + CO2. Involved in pyrimidine catabolism. May facilitate the hydrolysis of carbamate, a reaction that can also occur spontaneously. The chain is Putative carbamate hydrolase RutD from Escherichia coli O127:H6 (strain E2348/69 / EPEC).